The following is a 255-amino-acid chain: Acetylglutamate kinase (255 aa).

Substrate-binding positions include 40 to 41, Arg62, and Asn153; that span reads GG.

It belongs to the acetylglutamate kinase family. ArgB subfamily.

It localises to the cytoplasm. It carries out the reaction N-acetyl-L-glutamate + ATP = N-acetyl-L-glutamyl 5-phosphate + ADP. It functions in the pathway amino-acid biosynthesis; L-arginine biosynthesis; N(2)-acetyl-L-ornithine from L-glutamate: step 2/4. Its function is as follows. Catalyzes the ATP-dependent phosphorylation of N-acetyl-L-glutamate. In Bacillus anthracis (strain A0248), this protein is Acetylglutamate kinase.